The following is a 304-amino-acid chain: 2-phospho-L-lactate transferase (304 aa).

Asp49 is a binding site for 7,8-didemethyl-8-hydroxy-5-deazariboflavin.

It belongs to the CofD family. Homodimer. Mg(2+) serves as cofactor.

It carries out the reaction (2S)-lactyl-2-diphospho-5'-guanosine + 7,8-didemethyl-8-hydroxy-5-deazariboflavin = oxidized coenzyme F420-0 + GMP + H(+). The protein operates within cofactor biosynthesis; coenzyme F420 biosynthesis. Functionally, catalyzes the transfer of the 2-phospholactate moiety from (2S)-lactyl-2-diphospho-5'-guanosine to 7,8-didemethyl-8-hydroxy-5-deazariboflavin (FO) with the formation of oxidized coenzyme F420-0 and GMP. The sequence is that of 2-phospho-L-lactate transferase from Methanocorpusculum labreanum (strain ATCC 43576 / DSM 4855 / Z).